The primary structure comprises 360 residues: Methylthioribose-1-phosphate isomerase (360 aa).

The active-site Proton donor is the aspartate 246.

The protein belongs to the eIF-2B alpha/beta/delta subunits family. MtnA subfamily.

It is found in the cytoplasm. Its subcellular location is the nucleus. The enzyme catalyses 5-(methylsulfanyl)-alpha-D-ribose 1-phosphate = 5-(methylsulfanyl)-D-ribulose 1-phosphate. Its pathway is amino-acid biosynthesis; L-methionine biosynthesis via salvage pathway; L-methionine from S-methyl-5-thio-alpha-D-ribose 1-phosphate: step 1/6. Functionally, catalyzes the interconversion of methylthioribose-1-phosphate (MTR-1-P) into methylthioribulose-1-phosphate (MTRu-1-P). This Aedes aegypti (Yellowfever mosquito) protein is Methylthioribose-1-phosphate isomerase.